Consider the following 481-residue polypeptide: MGPEAAGPGRGAAPRLQVRTWIEPVVAATQVASSLYEAGLLLVVKASFGAGAGAGAGAASNHSAGPPRGAPEDQQQRAISNFYIVYNLVVGLTPLLSAYALGWLSDRRHRKVAICVALLGFLLSRVGLLLKVLLDWPVEVLYGAAALNGLCGGFSAFWAGVMALGSLGSSEGRRSVRLVLIDLILGLAGFCGSMASGHLFKQVAGHSGQGLVLTACSVSCATFALLYSLLVLKVPEAAAGSGQALSAGDSVAGTVGTYRTLDPDHSDKQSVQGLHPPSPGKAKPRRTIIALLFLGAIVYDLAVVGTVDVMPLFVLREPLSWNQVQVGYGMAAGYTIFITSFLGVLVFSRCFQDTTMIMIGMVSFGSGALLLAFVKETYMFYIARAVMLFALIPITTIRSAMSKLIKGSSYGKVFVILQLSLTLTGVVTSTVYNKIYQVTMEKFIGTCFALSSFLSFLAIIPIGIVAYKQASWLQYGDVRET.

Topologically, residues 1–37 (MGPEAAGPGRGAAPRLQVRTWIEPVVAATQVASSLYE) are cytoplasmic. The chain crosses the membrane as a helical span at residues 38–58 (AGLLLVVKASFGAGAGAGAGA). The Extracellular portion of the chain corresponds to 59–83 (ASNHSAGPPRGAPEDQQQRAISNFY). N61 is a glycosylation site (N-linked (GlcNAc...) asparagine). The helical transmembrane segment at 84 to 104 (IVYNLVVGLTPLLSAYALGWL) threads the bilayer. Residues 105-113 (SDRRHRKVA) are Cytoplasmic-facing. Residues 114 to 134 (ICVALLGFLLSRVGLLLKVLL) traverse the membrane as a helical segment. The Extracellular segment spans residues 135–143 (DWPVEVLYG). The chain crosses the membrane as a helical span at residues 144 to 164 (AAALNGLCGGFSAFWAGVMAL). Residues 165-179 (GSLGSSEGRRSVRLV) are Cytoplasmic-facing. The chain crosses the membrane as a helical span at residues 180 to 200 (LIDLILGLAGFCGSMASGHLF). The Extracellular portion of the chain corresponds to 201 to 210 (KQVAGHSGQG). The helical transmembrane segment at 211 to 231 (LVLTACSVSCATFALLYSLLV) threads the bilayer. At 232 to 286 (LKVPEAAAGSGQALSAGDSVAGTVGTYRTLDPDHSDKQSVQGLHPPSPGKAKPRR) the chain is on the cytoplasmic side. The interval 263-282 (PDHSDKQSVQGLHPPSPGKA) is disordered. The chain crosses the membrane as a helical span at residues 287–307 (TIIALLFLGAIVYDLAVVGTV). Residues 308-326 (DVMPLFVLREPLSWNQVQV) are Extracellular-facing. Residues 327–347 (GYGMAAGYTIFITSFLGVLVF) traverse the membrane as a helical segment. The Cytoplasmic portion of the chain corresponds to 348-353 (SRCFQD). Residues 354-374 (TTMIMIGMVSFGSGALLLAFV) traverse the membrane as a helical segment. The Extracellular segment spans residues 375-376 (KE). The chain crosses the membrane as a helical span at residues 377–397 (TYMFYIARAVMLFALIPITTI). Topologically, residues 398–412 (RSAMSKLIKGSSYGK) are cytoplasmic. A helical transmembrane segment spans residues 413–433 (VFVILQLSLTLTGVVTSTVYN). Topologically, residues 434–446 (KIYQVTMEKFIGT) are extracellular. Residues 447–467 (CFALSSFLSFLAIIPIGIVAY) form a helical membrane-spanning segment. Residues 468–481 (KQASWLQYGDVRET) are Cytoplasmic-facing.

The protein belongs to the major facilitator superfamily. SLC46A family. Glycosylated. As to expression, highly expressed by the epididymal duct epithelium.

It localises to the endosome membrane. Its subcellular location is the cell membrane. The catalysed reaction is N-acetyl-beta-D-glucosaminyl-(1-&gt;4)-1,6-anhydro-N-acetyl-beta-D-muramoyl-L-alanyl-gamma-D-glutamyl-meso-2,6-diaminopimeloyl-D-alanine(out) + n H(+)(out) = N-acetyl-beta-D-glucosaminyl-(1-&gt;4)-1,6-anhydro-N-acetyl-beta-D-muramoyl-L-alanyl-gamma-D-glutamyl-meso-2,6-diaminopimeloyl-D-alanine(in) + n H(+)(in). It carries out the reaction L-alanyl-gamma-D-glutamyl-meso-2,6-diaminopimelate(out) + n H(+)(out) = L-alanyl-gamma-D-glutamyl-meso-2,6-diaminopimelate(in) + n H(+)(in). It catalyses the reaction N-acetyl-D-muramoyl-L-alanyl-D-isoglutamine(out) + n H(+)(out) = N-acetyl-D-muramoyl-L-alanyl-D-isoglutamine(in) + n H(+)(in). The enzyme catalyses 2',3'-cGAMP(out) + n H(+)(out) = 2',3'-cGAMP(in) + n H(+)(in). The catalysed reaction is 3',3'-cGAMP(out) + n H(+)(out) = 3',3'-cGAMP(in) + n H(+)(in). Functionally, proton-coupled transporter that delivers pathogen-associated or danger-associated molecular patterns to cytosolic pattern recognition receptors as part of the innate immune response to microbes or tissue injury. Has selectivity toward muropeptides that contain the amino acid diaminopimelic acid (DAP-type peptidoglycan muropeptides) including Tri-DAP and tracheal toxin (TCT), common in Gram-negative bacteria and Gram-positive bacilli. In the context of immune recognition of skin microbiota, shuttles bacterial muropeptides across the endolysosomal membranes into the cytosol for recognition by NOD1, triggering MYD88-dependent secretion of IL1A and neutrophil recruitment in a pyroptosis-type inflammatory process. To a lesser extent and redundantly, transports muramyl dipeptides derived from most bacterial proteoglycans, eliciting NOD2 receptor activation and downstream inflammatory responses. Postulated to function as an importer of cyclic GMP-AMP dinucleotides (cGAMPs) in monocyte and macrophage cell lineages. Selectively imports cGAMPs derived from pathogenic bacteria such as 3'3'-cGAMP thus providing for differential immune recognition of pathogenic versus commensal bacteria. During tumorigenesis may transport extracellular tumor-derived 2'3'-cGAMP across the plasma membrane of M1-polarized macrophages to activate the anti-tumoral stimulator of interferon genes (STING) pathway. The transport mechanism, its electrogenicity and stoichiometry remain to be elucidated. This Canis lupus familiaris (Dog) protein is Solute carrier family 46 member 2.